Reading from the N-terminus, the 88-residue chain is U1-hexatoxin-Iw1d (88 aa).

The N-terminal stretch at 1–17 (LKFVVLICLVIMASTSA) is a signal peptide. Position 18 is a pyrrolidone carboxylic acid (glutamine 18). 5 disulfides stabilise this stretch: cysteine 20-cysteine 31, cysteine 25-cysteine 39, cysteine 30-cysteine 65, cysteine 49-cysteine 73, and cysteine 67-cysteine 80. The propeptide occupies 86–88 (RSE).

This sequence belongs to the MIT-like AcTx family. In terms of tissue distribution, expressed by the venom gland.

It localises to the secreted. The chain is U1-hexatoxin-Iw1d from Illawarra wisharti (Illawarra funnel-web spider).